Here is a 434-residue protein sequence, read N- to C-terminus: D-inositol 3-phosphate glycosyltransferase (434 aa).

His-26 contacts 1D-myo-inositol 3-phosphate. Residues 32 to 33 and Gly-40 each bind UDP-N-acetyl-alpha-D-glucosamine; that span reads QP. Residues 37–42, Lys-95, Tyr-128, Thr-152, and Arg-172 contribute to the 1D-myo-inositol 3-phosphate site; that span reads DAGGMN. UDP-N-acetyl-alpha-D-glucosamine is bound by residues Arg-246 and Lys-251. Positions 321, 322, and 324 each coordinate Mg(2+). UDP-N-acetyl-alpha-D-glucosamine is bound by residues Glu-334 and Glu-342. Thr-348 is a binding site for Mg(2+).

This sequence belongs to the glycosyltransferase group 1 family. MshA subfamily. Homodimer.

The enzyme catalyses 1D-myo-inositol 3-phosphate + UDP-N-acetyl-alpha-D-glucosamine = 1D-myo-inositol 2-acetamido-2-deoxy-alpha-D-glucopyranoside 3-phosphate + UDP + H(+). Its function is as follows. Catalyzes the transfer of a N-acetyl-glucosamine moiety to 1D-myo-inositol 3-phosphate to produce 1D-myo-inositol 2-acetamido-2-deoxy-glucopyranoside 3-phosphate in the mycothiol biosynthesis pathway. The chain is D-inositol 3-phosphate glycosyltransferase from Thermobifida fusca (strain YX).